The chain runs to 266 residues: uncharacterized protein (266 aa).

An N-terminal signal peptide occupies residues 1–22 (MRYLKKLAWFISVIILGIFIIG). C23 carries the N-palmitoyl cysteine lipid modification. C23 carries S-diacylglycerol cysteine lipidation.

It belongs to the staphylococcal tandem lipoprotein family.

It localises to the cell membrane. This is an uncharacterized protein from Staphylococcus aureus (strain USA300).